The following is a 201-amino-acid chain: Potassium-transporting ATPase KdpC subunit (201 aa).

The helical transmembrane segment at 12–34 threads the bilayer; that stretch reads LLALTMITGLAYPLAVTGLATVL. Positions 69 to 102 are disordered; it reads RPSATVAPDPADSSKTVSAPYNAANSGGSNLGPT. Polar residues predominate over residues 81–101; it reads SSKTVSAPYNAANSGGSNLGP.

Belongs to the KdpC family. The system is composed of three essential subunits: KdpA, KdpB and KdpC.

It localises to the cell inner membrane. Functionally, part of the high-affinity ATP-driven potassium transport (or Kdp) system, which catalyzes the hydrolysis of ATP coupled with the electrogenic transport of potassium into the cytoplasm. This subunit acts as a catalytic chaperone that increases the ATP-binding affinity of the ATP-hydrolyzing subunit KdpB by the formation of a transient KdpB/KdpC/ATP ternary complex. This is Potassium-transporting ATPase KdpC subunit from Rhodopseudomonas palustris (strain TIE-1).